The chain runs to 188 residues: CMT1A duplicated region transcript 15 protein (188 aa).

Expressed in fetal heart, kidney, liver, lung and spleen.

The protein is CMT1A duplicated region transcript 15 protein (CDRT15) of Homo sapiens (Human).